A 138-amino-acid polypeptide reads, in one-letter code: Large ribosomal subunit protein uL16 (138 aa).

The span at 1-16 (MLIPKRVKFRRQHRPN) shows a compositional bias: basic residues. The interval 1–25 (MLIPKRVKFRRQHRPNRSGMSKGGN) is disordered.

Belongs to the universal ribosomal protein uL16 family. Part of the 50S ribosomal subunit.

In terms of biological role, binds 23S rRNA and is also seen to make contacts with the A and possibly P site tRNAs. The sequence is that of Large ribosomal subunit protein uL16 from Corynebacterium urealyticum (strain ATCC 43042 / DSM 7109).